Here is a 380-residue protein sequence, read N- to C-terminus: Tomoregulin-1 (380 aa).

Positions 1 to 39 (MGAAAAEAPLRLPAAPPLAFCCYTSVLLLFAFSLPGSRA) are cleaved as a signal peptide. Residues 40 to 330 (SNQPPGGGGG…VPSRQKLTHV (291 aa)) are Extracellular-facing. Kazal-like domains are found at residues 98–145 (ACQF…PCYS) and 189–237 (VCNI…HCTD). Cystine bridges form between Cys-99-Cys-129, Cys-103-Cys-122, Cys-111-Cys-143, Cys-190-Cys-221, Cys-194-Cys-214, Cys-203-Cys-235, Cys-275-Cys-288, Cys-283-Cys-299, and Cys-301-Cys-310. The region spanning 271 to 311 (NHMPCPENLNGYCIHGKCEFIYSTQKASCRCESGYTGQHCE) is the EGF-like domain. Residues 331–351 (LIAAIIGAVQIAIIVAIVMCI) traverse the membrane as a helical segment. At 352-380 (TRKCPKNNRGRRQKQNLGHFTSDTSSRMV) the chain is on the cytoplasmic side. A disordered region spans residues 359–380 (NRGRRQKQNLGHFTSDTSSRMV). Over residues 366–380 (QNLGHFTSDTSSRMV) the composition is skewed to polar residues.

This sequence belongs to the tomoregulin family. In terms of assembly, may interact with ST14. Expressed predominantly in brain, and at lower levels in heart, placenta and skeletal muscle. Down-regulated in brain tumors as compared to control brain tissues.

It is found in the cell membrane. Functionally, neuron-specific restriction factor that prevents herpes simplex virus 1 (HHV-1) infection in the brain by blocking viral entry. Also able to restrict herpes simplex virus 2 (HHV-2) infection, although to a lesser extent. Acts by preventing the association between the viral glycoprotein D (gD) and its cell surface receptor NECTIN1, thereby inhibiting fusion of the virus and the cell membrane. Also able to prevent the association between the viral glycoprotein B (gB) and MYH9/NMMHC-IIA and MYH10/NMMHC-IIB receptors. May be a tumor suppressor in brain cancers. The protein is Tomoregulin-1 of Homo sapiens (Human).